Here is a 75-residue protein sequence, read N- to C-terminus: Toxin-like peptide AaF1CA7 (75 aa).

An N-terminal signal peptide occupies residues 1-22 (MMKLMLFSIIVILFSLIGSIHG). Residues 25–75 (VPGNYPLDSSDDTYLCAPLGENPSCIQICRKHGVKYGYCYAFQCWCEYFGR) form the LCN-type CS-alpha/beta domain. Intrachain disulfides connect C40–C63, C49–C68, and C53–C70.

Belongs to the long (3 C-C) scorpion toxin superfamily. Expressed by the venom gland.

It is found in the secreted. Functionally, probable neurotoxin that inhibits ion channels. This Androctonus australis (Sahara scorpion) protein is Toxin-like peptide AaF1CA7.